A 397-amino-acid polypeptide reads, in one-letter code: Lysophospholipid transporter LplT (397 aa).

11 helical membrane passes run 16–36 (MMAV…LLFA), 53–73 (VLQM…GQVA), 91–111 (LGAV…LVGV), 139–159 (LMES…GMLA), 164–184 (GAAL…NLLI), 229–249 (WGAG…ALGI), 257–277 (YLNA…AKLV), 282–302 (VSRC…FSLQ), 304–324 (AALP…FFVV), 344–364 (IAVQ…LYSL), and 372–392 (VVGI…GLWL).

This sequence belongs to the major facilitator superfamily. LplT (TC 2.A.1.42) family.

It is found in the cell inner membrane. In terms of biological role, catalyzes the facilitated diffusion of 2-acyl-glycero-3-phosphoethanolamine (2-acyl-GPE) into the cell. This is Lysophospholipid transporter LplT from Cronobacter sakazakii (strain ATCC BAA-894) (Enterobacter sakazakii).